We begin with the raw amino-acid sequence, 579 residues long: MNRDNMDTTKRKEDHTKHTTDVIEFYEEGTAASSLNIATEKANSSPSILRRIINRAAWLSKKVDAMGVESTGIQRISPYERGTSKKQFLHVAGLWLSATGGLSSMSSFLLGPLLFGLSFRESLASSLISVTIGCLIAAYCSIMGPQSGCRQMVTARYLFGWWFVKLVALASIIGVMGWSVVNSVVGGEMLAAISNDKVPLWVGIVIVTVCSFLVAIFGIKQVIKVETYLSVPVLTAFLLLYISSSDKYSFVNAYVSKGNLDSSTRKGNWMSFFSLCYSITATWGSITADYYILFPEDTPYIQIFCLTFFGTFLPTCFVGILGLLLASVAMSYKPWSVEYDSHGMGGLLWAGFQRWNGFGKFCVVVLVFSLVSNNIINTYSAAFSIQLSSVFCAKIPRWFWSIVCTIICLVCALIGRNHFSTILGNFLPMIGYWISMYFILLFEENLVFRRFFLHLYTKEFPTVTGEINGPELVGSSKEVEKDAVTNIHLLKRKHKVTKHRYNWDKWEDYEVLTHGYAATFAFIVGVAGVVVGMAQAYWIGPIAAKFGEYGGDVAMWLSMAFSGVVYPPCRYLELRKFGR.

A run of 12 helical transmembrane segments spans residues 99 to 119 (TGGLSSMSSFLLGPLLFGLSF), 123 to 143 (LASSLISVTIGCLIAAYCSIM), 158 to 178 (LFGWWFVKLVALASIIGVMGW), 199 to 219 (PLWVGIVIVTVCSFLVAIFGI), 222 to 242 (VIKVETYLSVPVLTAFLLLYI), 275 to 295 (LCYSITATWGSITADYYILFP), 303 to 323 (IFCLTFFGTFLPTCFVGILGL), 363 to 383 (VVVLVFSLVSNNIINTYSAAF), 395 to 415 (IPRWFWSIVCTIICLVCALIG), 422 to 442 (ILGNFLPMIGYWISMYFILLF), 520 to 540 (FAFIVGVAGVVVGMAQAYWIG), and 546 to 566 (FGEYGGDVAMWLSMAFSGVVY).

This sequence belongs to the purine-cytosine permease (2.A.39) family.

The protein localises to the membrane. Thiamine-regulated, high affinity import carrier of pyridoxine, pyridoxal and pyridoxamine. This is Vitamin B6 transporter TPN1 (TPN1) from Saccharomyces cerevisiae (Baker's yeast).